Reading from the N-terminus, the 413-residue chain is ATP-dependent (S)-NAD(P)H-hydrate dehydratase (413 aa).

The YjeF C-terminal domain occupies asparagine 98–glycine 402. (6S)-NADPHX is bound by residues glycine 199 and asparagine 252–alanine 258. ATP is bound by residues lysine 292–aspartate 296 and glycine 311–glycine 320. Residue aspartate 321 coordinates (6S)-NADPHX.

It belongs to the NnrD/CARKD family. Requires Mg(2+) as cofactor.

It carries out the reaction (6S)-NADHX + ATP = ADP + phosphate + NADH + H(+). It catalyses the reaction (6S)-NADPHX + ATP = ADP + phosphate + NADPH + H(+). Catalyzes the dehydration of the S-form of NAD(P)HX at the expense of ATP, which is converted to ADP. Together with NAD(P)HX epimerase, which catalyzes the epimerization of the S- and R-forms, the enzyme allows the repair of both epimers of NAD(P)HX, a damaged form of NAD(P)H that is a result of enzymatic or heat-dependent hydration. The sequence is that of ATP-dependent (S)-NAD(P)H-hydrate dehydratase from Heterostelium pallidum (strain ATCC 26659 / Pp 5 / PN500) (Cellular slime mold).